The following is a 608-amino-acid chain: AAA ATPase forming ring-shaped complexes (608 aa).

Positions 45–79 (AQEYDAVLRRLSAAEATRDNMSRQIRGAGEKNRKL) form a coiled coil. 302–307 (GNGKTM) is a binding site for ATP.

This sequence belongs to the AAA ATPase family. As to quaternary structure, homohexamer. Assembles into a hexameric ring structure.

The chain is AAA ATPase forming ring-shaped complexes from Rothia mucilaginosa (strain DY-18) (Stomatococcus mucilaginosus).